The sequence spans 343 residues: Apolipoprotein L6 (343 aa).

A compositionally biased stretch (basic and acidic residues) spans 1–10 (MDNQAERESE). Residues 1 to 24 (MDNQAERESEAGVGLQRDEDDAPL) form a disordered region.

Belongs to the apolipoprotein L family. In terms of tissue distribution, widely expressed; highly expressed in the uterus, fetal brain and spinal cord, also detected in heart, liver, lung, colon, spleen, thymus, prostate, placenta, adrenal gland, salivary and mammary gland.

The protein resides in the cytoplasm. May affect the movement of lipids in the cytoplasm or allow the binding of lipids to organelles. This chain is Apolipoprotein L6 (APOL6), found in Homo sapiens (Human).